The sequence spans 382 residues: UBP1-associated proteins 1B (382 aa).

Positions methionine 1–serine 99 are disordered. Positions lysine 10 to lysine 22 are enriched in basic residues. Residues arginine 23 to lysine 34 are compositionally biased toward basic and acidic residues. The RRM domain maps to arginine 163–glutamate 248.

The protein resides in the nucleus. Acts as a component of a complex regulating the turnover of mRNAs in the nucleus. Binds with high affinity to RNA molecules that contain U-rich sequences in 3'-UTRs. May function in complex with UBP1 and contribute to the stabilization of mRNAs in the nucleus. This chain is UBP1-associated proteins 1B (UBA1B), found in Arabidopsis thaliana (Mouse-ear cress).